Consider the following 284-residue polypeptide: Efem/EfeO family lipoprotein (284 aa).

The first 17 residues, 1-17 (MKKLTTLLLASTLLIAA), serve as a signal peptide directing secretion. Residue Cys-18 is the site of N-palmitoyl cysteine attachment. Residue Cys-18 is the site of S-diacylglycerol cysteine attachment.

It belongs to the EfeM/EfeO family.

The protein localises to the cell membrane. The polypeptide is Efem/EfeO family lipoprotein (Staphylococcus aureus (strain MSSA476)).